Here is a 123-residue protein sequence, read N- to C-terminus: Large ribosomal subunit protein uL14c (123 aa).

This sequence belongs to the universal ribosomal protein uL14 family. As to quaternary structure, part of the 50S ribosomal subunit.

The protein localises to the plastid. It localises to the chloroplast. Its function is as follows. Binds to 23S rRNA. The polypeptide is Large ribosomal subunit protein uL14c (Triticum aestivum (Wheat)).